The primary structure comprises 299 residues: Nucleotide-binding protein DIP1313 (299 aa).

22–29 (GLSGAGLS) contacts ATP. 73 to 76 (DVRS) is a GTP binding site.

This sequence belongs to the RapZ-like family.

Its function is as follows. Displays ATPase and GTPase activities. The sequence is that of Nucleotide-binding protein DIP1313 from Corynebacterium diphtheriae (strain ATCC 700971 / NCTC 13129 / Biotype gravis).